Reading from the N-terminus, the 141-residue chain is ATP synthase epsilon chain (141 aa).

This sequence belongs to the ATPase epsilon chain family. F-type ATPases have 2 components, CF(1) - the catalytic core - and CF(0) - the membrane proton channel. CF(1) has five subunits: alpha(3), beta(3), gamma(1), delta(1), epsilon(1). CF(0) has three main subunits: a, b and c.

The protein localises to the cell inner membrane. In terms of biological role, produces ATP from ADP in the presence of a proton gradient across the membrane. The polypeptide is ATP synthase epsilon chain (Pseudomonas savastanoi pv. phaseolicola (strain 1448A / Race 6) (Pseudomonas syringae pv. phaseolicola (strain 1448A / Race 6))).